A 419-amino-acid polypeptide reads, in one-letter code: Serine hydroxymethyltransferase (419 aa).

(6S)-5,6,7,8-tetrahydrofolate is bound by residues Leu121 and 125–127; that span reads GHL. Lys230 bears the N6-(pyridoxal phosphate)lysine mark. 354-356 contacts (6S)-5,6,7,8-tetrahydrofolate; the sequence is SPF.

This sequence belongs to the SHMT family. As to quaternary structure, homodimer. Pyridoxal 5'-phosphate is required as a cofactor.

Its subcellular location is the cytoplasm. It catalyses the reaction (6R)-5,10-methylene-5,6,7,8-tetrahydrofolate + glycine + H2O = (6S)-5,6,7,8-tetrahydrofolate + L-serine. It participates in one-carbon metabolism; tetrahydrofolate interconversion. The protein operates within amino-acid biosynthesis; glycine biosynthesis; glycine from L-serine: step 1/1. Functionally, catalyzes the reversible interconversion of serine and glycine with tetrahydrofolate (THF) serving as the one-carbon carrier. This reaction serves as the major source of one-carbon groups required for the biosynthesis of purines, thymidylate, methionine, and other important biomolecules. Also exhibits THF-independent aldolase activity toward beta-hydroxyamino acids, producing glycine and aldehydes, via a retro-aldol mechanism. In Prochlorococcus marinus (strain SARG / CCMP1375 / SS120), this protein is Serine hydroxymethyltransferase.